The following is a 541-amino-acid chain: Glucose-6-phosphate isomerase (541 aa).

The active-site Proton donor is the Glu-346. Residues His-377 and Lys-506 contribute to the active site.

The protein belongs to the GPI family.

Its subcellular location is the cytoplasm. The enzyme catalyses alpha-D-glucose 6-phosphate = beta-D-fructose 6-phosphate. It functions in the pathway carbohydrate biosynthesis; gluconeogenesis. Its pathway is carbohydrate degradation; glycolysis; D-glyceraldehyde 3-phosphate and glycerone phosphate from D-glucose: step 2/4. Catalyzes the reversible isomerization of glucose-6-phosphate to fructose-6-phosphate. The sequence is that of Glucose-6-phosphate isomerase from Rhizobium meliloti (strain 1021) (Ensifer meliloti).